A 369-amino-acid polypeptide reads, in one-letter code: Anthranilate phosphoribosyltransferase (369 aa).

Residues G111, 114–115 (GD), T119, 121–124 (NIST), 139–147 (KHGNRGVSS), and S151 each bind 5-phospho-alpha-D-ribose 1-diphosphate. Residue G111 participates in anthranilate binding. S123 provides a ligand contact to Mg(2+). Position 142 (N142) interacts with anthranilate. R197 is an anthranilate binding site. Residues D256 and E257 each contribute to the Mg(2+) site.

This sequence belongs to the anthranilate phosphoribosyltransferase family. As to quaternary structure, homodimer. It depends on Mg(2+) as a cofactor.

The enzyme catalyses N-(5-phospho-beta-D-ribosyl)anthranilate + diphosphate = 5-phospho-alpha-D-ribose 1-diphosphate + anthranilate. The protein operates within amino-acid biosynthesis; L-tryptophan biosynthesis; L-tryptophan from chorismate: step 2/5. In terms of biological role, catalyzes the transfer of the phosphoribosyl group of 5-phosphorylribose-1-pyrophosphate (PRPP) to anthranilate to yield N-(5'-phosphoribosyl)-anthranilate (PRA). In Cupriavidus pinatubonensis (strain JMP 134 / LMG 1197) (Cupriavidus necator (strain JMP 134)), this protein is Anthranilate phosphoribosyltransferase.